Reading from the N-terminus, the 279-residue chain is Sarcosine/dimethylglycine N-methyltransferase (279 aa).

The protein belongs to the methyltransferase superfamily. In terms of assembly, monomer.

It carries out the reaction sarcosine + 2 S-adenosyl-L-methionine = glycine betaine + 2 S-adenosyl-L-homocysteine + 2 H(+). The catalysed reaction is sarcosine + S-adenosyl-L-methionine = N,N-dimethylglycine + S-adenosyl-L-homocysteine + H(+). It catalyses the reaction N,N-dimethylglycine + S-adenosyl-L-methionine = glycine betaine + S-adenosyl-L-homocysteine + H(+). Its pathway is amine and polyamine biosynthesis; betaine biosynthesis via glycine pathway; betaine from glycine: step 2/3. The protein operates within amine and polyamine biosynthesis; betaine biosynthesis via glycine pathway; betaine from glycine: step 3/3. With respect to regulation, p-chloromercuribenzoate acid inhibits 23% of the SDMT activities on sarcosine and dimethylglycine, and S-adenosylhomocysteine (AdoHcy) inhibits completely GSMT activities. Its function is as follows. Catalyzes the methylation of sarcosine and dimethylglycine to dimethylglycine and betaine, respectively, with S-adenosylmethionine (AdoMet) acting as the methyl donor. It has strict specificity for sarcosine and dimethylglycine as the methyl group acceptors. The chain is Sarcosine/dimethylglycine N-methyltransferase from Halorhodospira halochloris (Ectothiorhodospira halochloris).